The chain runs to 108 residues: FK506-binding protein 1 (108 aa).

The 89-residue stretch at 20–108 folds into the PPIase FKBP-type domain; sequence GDSVTIHYVG…KFEVELLKIN (89 aa).

This sequence belongs to the FKBP-type PPIase family. FKBP1 subfamily.

The protein resides in the cytoplasm. The catalysed reaction is [protein]-peptidylproline (omega=180) = [protein]-peptidylproline (omega=0). With respect to regulation, inhibited by both FK506 and rapamycin. Its function is as follows. PPIases accelerate the folding of proteins. It catalyzes the cis-trans isomerization of proline imidic peptide bonds in oligopeptides. The protein is FK506-binding protein 1 (FPR1) of Cryptococcus neoformans var. neoformans serotype D (strain JEC21 / ATCC MYA-565) (Filobasidiella neoformans).